The primary structure comprises 274 residues: MLLAIDVRNTHTVVGLLSGSKEHAKVVQQWRIRTESEVTADELALIIDGLIGDDSERLAGAAALSTVPSVLHEVRIMLDQYWPSVPHVLIEPGVRTGIPLLVDNPKEVGADRIVNCLAAFHKFGQAAIVVDFGSSICVDVVSAKGEFLGGAIAPGVQVSSDAAAARSAALRRVELARPRSVVGKNTVECMQAGVVFGFAGLVDGLVGRMRQDVEEFSGDLGNRVAVVATGHTAPLLLPELHTVDHYDRHLTLHGLRLVFERNREAQRGRLKTAR.

ATP is bound at residue 6–13; the sequence is DVRNTHTV. 109-112 contributes to the substrate binding site; the sequence is GADR. The active-site Proton acceptor is the D111. A K(+)-binding site is contributed by D131. An ATP-binding site is contributed by S134. T186 is a binding site for substrate.

Belongs to the type III pantothenate kinase family. In terms of assembly, homodimer. It depends on NH4(+) as a cofactor. The cofactor is K(+).

Its subcellular location is the cytoplasm. The catalysed reaction is (R)-pantothenate + ATP = (R)-4'-phosphopantothenate + ADP + H(+). It functions in the pathway cofactor biosynthesis; coenzyme A biosynthesis; CoA from (R)-pantothenate: step 1/5. In terms of biological role, catalyzes the phosphorylation of pantothenate (Pan), the first step in CoA biosynthesis. The chain is Type III pantothenate kinase from Mycobacterium leprae (strain Br4923).